The sequence spans 279 residues: HTH-type transcriptional activator RhaS (279 aa).

In terms of domain architecture, HTH araC/xylS-type spans 175 to 273 (QALLGWLQNN…SQAPKSLRHQ (99 aa)). DNA-binding regions (H-T-H motif) lie at residues 192–213 (GSLADRFSLPLRTLHRQLKQHT) and 240–263 (ITTIAHACGFSDSNHFSTQFRKAF).

As to quaternary structure, binds DNA as a dimer.

It is found in the cytoplasm. Its function is as follows. Activates expression of the rhaBAD and rhaT operons. The polypeptide is HTH-type transcriptional activator RhaS (Pectobacterium carotovorum subsp. carotovorum (strain PC1)).